A 67-amino-acid polypeptide reads, in one-letter code: Large ribosomal subunit protein bL32c (67 aa).

It belongs to the bacterial ribosomal protein bL32 family.

It localises to the plastid. It is found in the chloroplast. In Chara vulgaris (Common stonewort), this protein is Large ribosomal subunit protein bL32c.